Here is a 265-residue protein sequence, read N- to C-terminus: Homeobox protein engrailed-2-A (265 aa).

Basic and acidic residues-rich tracts occupy residues 1-12 (MEENEQNNREVE) and 102-115 (GEKK…ETLK). Disordered regions lie at residues 1 to 38 (MEEN…QPHH), 75 to 140 (LSGA…KATQ), and 156 to 181 (DRPS…RPRT). Low complexity predominate over residues 122 to 136 (DHSLSSDSDSSQTSS). Residues 176 to 235 (DKRPRTAFTADQLQRLKAEFQTNRYLTEQRRQSLAQELSLNESQIKIWFQNKRAKIKKAT) constitute a DNA-binding region (homeobox).

Belongs to the engrailed homeobox family.

It localises to the nucleus. This chain is Homeobox protein engrailed-2-A (en2-a), found in Xenopus laevis (African clawed frog).